A 413-amino-acid chain; its full sequence is Multifunctional CCA protein (413 aa).

ATP contacts are provided by Gly-8 and Arg-11. CTP-binding residues include Gly-8 and Arg-11. 2 residues coordinate Mg(2+): Asp-21 and Asp-23. ATP is bound by residues Arg-91, Arg-137, and Arg-140. 3 residues coordinate CTP: Arg-91, Arg-137, and Arg-140. The 102-residue stretch at 228 to 329 folds into the HD domain; that stretch reads TGIHTLMTLS…VKLFDSIDAW (102 aa).

The protein belongs to the tRNA nucleotidyltransferase/poly(A) polymerase family. Bacterial CCA-adding enzyme type 1 subfamily. Monomer. Can also form homodimers and oligomers. Requires Mg(2+) as cofactor. It depends on Ni(2+) as a cofactor.

It carries out the reaction a tRNA precursor + 2 CTP + ATP = a tRNA with a 3' CCA end + 3 diphosphate. The enzyme catalyses a tRNA with a 3' CCA end + 2 CTP + ATP = a tRNA with a 3' CCACCA end + 3 diphosphate. Catalyzes the addition and repair of the essential 3'-terminal CCA sequence in tRNAs without using a nucleic acid template. Adds these three nucleotides in the order of C, C, and A to the tRNA nucleotide-73, using CTP and ATP as substrates and producing inorganic pyrophosphate. tRNA 3'-terminal CCA addition is required both for tRNA processing and repair. Also involved in tRNA surveillance by mediating tandem CCA addition to generate a CCACCA at the 3' terminus of unstable tRNAs. While stable tRNAs receive only 3'-terminal CCA, unstable tRNAs are marked with CCACCA and rapidly degraded. The polypeptide is Multifunctional CCA protein (Citrobacter koseri (strain ATCC BAA-895 / CDC 4225-83 / SGSC4696)).